We begin with the raw amino-acid sequence, 401 residues long: Protein KlcB (401 aa).

Residues 253–311 (AARSNAKGKAGGRERDPASAETAMRCSTAKADDCKAEAGPVSPEATMPGAGEASCSTAR) are disordered.

The chain is Protein KlcB (klcB) from Escherichia coli.